Reading from the N-terminus, the 101-residue chain is Ascorbate-specific PTS system EIIB component (101 aa).

Residues Val3–Phe96 enclose the PTS EIIB type-2 domain. Catalysis depends on Cys9, which acts as the Phosphocysteine intermediate. Cys9 carries the phosphocysteine modification.

The protein localises to the cytoplasm. It carries out the reaction N(pros)-phospho-L-histidyl-[protein] + L-ascorbate(out) = L-ascorbate 6-phosphate(in) + L-histidyl-[protein]. In terms of biological role, the phosphoenolpyruvate-dependent sugar phosphotransferase system (sugar PTS), a major carbohydrate active transport system, catalyzes the phosphorylation of incoming sugar substrates concomitantly with their translocation across the cell membrane. The enzyme II UlaABC PTS system is involved in ascorbate transport. The polypeptide is Ascorbate-specific PTS system EIIB component (ulaB) (Salmonella choleraesuis (strain SC-B67)).